A 237-amino-acid polypeptide reads, in one-letter code: tRNA (guanine-N(7)-)-methyltransferase (237 aa).

Residues Glu-67, Glu-92, Asp-119, and Asp-141 each coordinate S-adenosyl-L-methionine. Asp-141 is an active-site residue. Substrate is bound by residues Lys-145, Asp-177, and 214-217; that span reads TRYE.

It belongs to the class I-like SAM-binding methyltransferase superfamily. TrmB family.

It catalyses the reaction guanosine(46) in tRNA + S-adenosyl-L-methionine = N(7)-methylguanosine(46) in tRNA + S-adenosyl-L-homocysteine. It participates in tRNA modification; N(7)-methylguanine-tRNA biosynthesis. In terms of biological role, catalyzes the formation of N(7)-methylguanine at position 46 (m7G46) in tRNA. In Jannaschia sp. (strain CCS1), this protein is tRNA (guanine-N(7)-)-methyltransferase.